We begin with the raw amino-acid sequence, 102 residues long: Movement protein (102 aa).

The helical transmembrane segment at 43 to 63 (VVALIVILFAVGIVYLAYTLF) threads the bilayer. Residues 82-102 (IGFGNTPLRRPGEGNPNGGPV) are disordered.

The protein belongs to the mastrevirus movement protein family. As to quaternary structure, interacts with the capsid protein (CP). Part of a MP-CP-viral DNA complex.

The protein localises to the host membrane. Involved in the viral transport within, and between cells. The polypeptide is Movement protein (Tobacco yellow dwarf virus (strain Australia) (TYDV)).